The following is a 140-amino-acid chain: Smith-Magenis syndrome chromosomal region candidate gene 5 protein (140 aa).

The disordered stretch occupies residues 43–77 (CTGPSSQAPPQPPQASPPAAADHSRTPSLLASSHS). Positions 49–58 (QAPPQPPQAS) are enriched in pro residues.

As to expression, widely expressed.

The polypeptide is Smith-Magenis syndrome chromosomal region candidate gene 5 protein (SMCR5) (Homo sapiens (Human)).